A 511-amino-acid chain; its full sequence is Exodeoxyribonuclease 7 large subunit (511 aa).

The protein belongs to the XseA family. As to quaternary structure, heterooligomer composed of large and small subunits.

Its subcellular location is the cytoplasm. The catalysed reaction is Exonucleolytic cleavage in either 5'- to 3'- or 3'- to 5'-direction to yield nucleoside 5'-phosphates.. Its function is as follows. Bidirectionally degrades single-stranded DNA into large acid-insoluble oligonucleotides, which are then degraded further into small acid-soluble oligonucleotides. The sequence is that of Exodeoxyribonuclease 7 large subunit from Brucella canis (strain ATCC 23365 / NCTC 10854 / RM-666).